The primary structure comprises 259 residues: Hydroxyethylthiazole kinase (259 aa).

Met-38 serves as a coordination point for substrate. The ATP site is built by Arg-113 and Ser-158. Position 185 (Gly-185) interacts with substrate.

This sequence belongs to the Thz kinase family. The cofactor is Mg(2+).

It carries out the reaction 5-(2-hydroxyethyl)-4-methylthiazole + ATP = 4-methyl-5-(2-phosphooxyethyl)-thiazole + ADP + H(+). Its pathway is cofactor biosynthesis; thiamine diphosphate biosynthesis; 4-methyl-5-(2-phosphoethyl)-thiazole from 5-(2-hydroxyethyl)-4-methylthiazole: step 1/1. Functionally, catalyzes the phosphorylation of the hydroxyl group of 4-methyl-5-beta-hydroxyethylthiazole (THZ). This Leuconostoc citreum (strain KM20) protein is Hydroxyethylthiazole kinase.